A 493-amino-acid polypeptide reads, in one-letter code: Lysine--tRNA ligase (493 aa).

Residues 26-34 (PSGHIHLGN) carry the 'HIGH' region motif. A 'KMSKS' region motif is present at residues 270–274 (AMKSS).

The protein belongs to the class-I aminoacyl-tRNA synthetase family.

It is found in the cytoplasm. It carries out the reaction tRNA(Lys) + L-lysine + ATP = L-lysyl-tRNA(Lys) + AMP + diphosphate. This chain is Lysine--tRNA ligase (lysS), found in Archaeoglobus fulgidus (strain ATCC 49558 / DSM 4304 / JCM 9628 / NBRC 100126 / VC-16).